The following is a 123-amino-acid chain: Large ribosomal subunit protein bL12 (123 aa).

Belongs to the bacterial ribosomal protein bL12 family. As to quaternary structure, homodimer. Part of the ribosomal stalk of the 50S ribosomal subunit. Forms a multimeric L10(L12)X complex, where L10 forms an elongated spine to which 2 to 4 L12 dimers bind in a sequential fashion. Binds GTP-bound translation factors.

Its function is as follows. Forms part of the ribosomal stalk which helps the ribosome interact with GTP-bound translation factors. Is thus essential for accurate translation. This Borrelia duttonii (strain Ly) protein is Large ribosomal subunit protein bL12.